An 847-amino-acid polypeptide reads, in one-letter code: Alanine--tRNA ligase (847 aa).

4 residues coordinate Zn(2+): histidine 554, histidine 558, cysteine 656, and histidine 660.

Belongs to the class-II aminoacyl-tRNA synthetase family. Zn(2+) serves as cofactor.

It localises to the cytoplasm. The enzyme catalyses tRNA(Ala) + L-alanine + ATP = L-alanyl-tRNA(Ala) + AMP + diphosphate. In terms of biological role, catalyzes the attachment of alanine to tRNA(Ala) in a two-step reaction: alanine is first activated by ATP to form Ala-AMP and then transferred to the acceptor end of tRNA(Ala). Also edits incorrectly charged Ser-tRNA(Ala) and Gly-tRNA(Ala) via its editing domain. The sequence is that of Alanine--tRNA ligase from Helicobacter pylori (strain J99 / ATCC 700824) (Campylobacter pylori J99).